The primary structure comprises 192 residues: UPF0312 protein PC1_2518 (192 aa).

An N-terminal signal peptide occupies residues 1–23 (MLKKTLLSLTAVSMLASAGSALA).

It belongs to the UPF0312 family. Type 1 subfamily.

Its subcellular location is the periplasm. This chain is UPF0312 protein PC1_2518, found in Pectobacterium carotovorum subsp. carotovorum (strain PC1).